Consider the following 121-residue polypeptide: Large ribosomal subunit protein eL18 (121 aa).

The protein belongs to the eukaryotic ribosomal protein eL18 family.

The sequence is that of Large ribosomal subunit protein eL18 from Methanocaldococcus jannaschii (strain ATCC 43067 / DSM 2661 / JAL-1 / JCM 10045 / NBRC 100440) (Methanococcus jannaschii).